We begin with the raw amino-acid sequence, 123 residues long: Holo-[acyl-carrier-protein] synthase (123 aa).

Mg(2+) contacts are provided by D8 and E56.

This sequence belongs to the P-Pant transferase superfamily. AcpS family. Mg(2+) serves as cofactor.

Its subcellular location is the cytoplasm. It carries out the reaction apo-[ACP] + CoA = holo-[ACP] + adenosine 3',5'-bisphosphate + H(+). Its function is as follows. Transfers the 4'-phosphopantetheine moiety from coenzyme A to a Ser of acyl-carrier-protein. The sequence is that of Holo-[acyl-carrier-protein] synthase from Clostridium botulinum (strain Alaska E43 / Type E3).